The following is a 552-amino-acid chain: Gamma-aminobutyric acid receptor subunit alpha-4 (552 aa).

Positions 1–35 (MVSVQKVPAIALCSGVSLALLHFLCLAACLNESPG) are cleaved as a signal peptide. Over 36-259 (QNSKDEKLCP…FHLRRKMGYF (224 aa)) the chain is Extracellular. N-linked (GlcNAc...) asparagine glycosylation is present at asparagine 47. Arginine 100 provides a ligand contact to 4-aminobutanoate. Residues asparagine 144 and asparagine 157 are each glycosylated (N-linked (GlcNAc...) asparagine). Threonine 163 lines the 4-aminobutanoate pocket. Cysteines 172 and 186 form a disulfide. Residues 260 to 280 (MIQTYIPCIMTVILSQVSFWI) traverse the membrane as a helical segment. The Cytoplasmic portion of the chain corresponds to 281–284 (NKES). A helical membrane pass occupies residues 285 to 305 (VPARTVFGITTVLTMTTLSIS). Residues 306 to 318 (ARHSLPKVSYATA) are Extracellular-facing. The chain crosses the membrane as a helical span at residues 319 to 341 (MDWFIAVCFAFVFSALIEFAAVN). At 342-515 (YFTNIQMQKA…PPPSGSGTSK (174 aa)) the chain is on the cytoplasmic side. Disordered regions lie at residues 353 to 480 (KKIS…FGSR) and 492 to 513 (GAAGNVSATPPPPAPPPSGSGT). Basic and acidic residues predominate over residues 396-406 (SESDVKSRTEV). Polar residues predominate over residues 407-422 (GNHSSKTSAVQESSEA). A compositionally biased stretch (low complexity) spans 445 to 458 (SAAARGLSSAASPS). The segment covering 500–509 (TPPPPAPPPS) has biased composition (pro residues). Residues 516–538 (IDKYARILFPVTFGAFNMVYWVV) form a helical membrane-spanning segment. Residues 539–552 (YLSKDTMEKSESLM) are Extracellular-facing.

Belongs to the ligand-gated ion channel (TC 1.A.9) family. Gamma-aminobutyric acid receptor (TC 1.A.9.5) subfamily. GABRA4 sub-subfamily. As to quaternary structure, heteropentamer, formed by a combination of alpha (GABRA1-6), beta (GABRB1-3), gamma (GABRG1-3), delta (GABRD), epsilon (GABRE), rho (GABRR1-3), pi (GABRP) and theta (GABRQ) chains, each subunit exhibiting distinct physiological and pharmacological properties. Expressed in the brain.

It localises to the cell membrane. It is found in the postsynaptic cell membrane. The enzyme catalyses chloride(in) = chloride(out). Its activity is regulated as follows. Potentiated by gaboxadol. Potentiated by histamine. In terms of biological role, alpha subunit of the heteropentameric ligand-gated chloride channel gated by gamma-aminobutyric acid (GABA), a major inhibitory neurotransmitter in the brain. GABA-gated chloride channels, also named GABA(A) receptors (GABAAR), consist of five subunits arranged around a central pore and contain GABA active binding site(s) located at the alpha and beta subunit interface(s). Alpha-4/GABRA4 subunit often assembles with delta or gamma-2 subunits, in combination with beta subunits. When activated by GABA, GABAARs selectively allow the flow of chloride anions across the cell membrane down their electrochemical gradient. GABAARs containing alpha-4 are predominantly extrasynaptic, contributing to tonic inhibition in dentate granule cells and thalamic relay neurons. Extrasynaptic alpha-4-containing GABAARs control levels of excitability and network activity. GABAAR containing alpha-4-beta-3-delta subunits can simultaneously bind GABA and histamine where histamine binds at the interface of two neighboring beta subunits, which may be involved in the regulation of sleep and wakefulness. In Mus musculus (Mouse), this protein is Gamma-aminobutyric acid receptor subunit alpha-4.